The following is a 428-amino-acid chain: GTPase Obg (428 aa).

Residues 1–158 (MFVDQVKVYV…RDVILELKVL (158 aa)) form the Obg domain. The interval 118 to 145 (KGGRGGRGNSRFATPANPAPQLSENGEP) is disordered. Residues 159-329 (ADVGLVGFPS…LLFEIANQLE (171 aa)) enclose the OBG-type G domain. GTP is bound by residues 165–172 (GFPSVGKS), 190–194 (FTTLV), 212–215 (DLPG), 282–285 (NKMD), and 310–312 (SAI). S172 and T192 together coordinate Mg(2+). The 79-residue stretch at 350–428 (RFDEGDAPFE…LLEFEFEFID (79 aa)) folds into the OCT domain.

It belongs to the TRAFAC class OBG-HflX-like GTPase superfamily. OBG GTPase family. As to quaternary structure, monomer. Mg(2+) is required as a cofactor.

It localises to the cytoplasm. In terms of biological role, an essential GTPase which binds GTP, GDP and possibly (p)ppGpp with moderate affinity, with high nucleotide exchange rates and a fairly low GTP hydrolysis rate. Plays a role in control of the cell cycle, stress response, ribosome biogenesis and in those bacteria that undergo differentiation, in morphogenesis control. The sequence is that of GTPase Obg from Bacillus pumilus (strain SAFR-032).